The following is a 283-amino-acid chain: Urease accessory protein UreD (283 aa).

The disordered stretch occupies residues Met1–Gly21.

This sequence belongs to the UreD family. As to quaternary structure, ureD, UreF and UreG form a complex that acts as a GTP-hydrolysis-dependent molecular chaperone, activating the urease apoprotein by helping to assemble the nickel containing metallocenter of UreC. The UreE protein probably delivers the nickel.

It is found in the cytoplasm. Its function is as follows. Probably acts in the maturation of urease via the functional incorporation of the urease nickel metallocenter. Required for urease expression. The protein is Urease accessory protein UreD of Corynebacterium glutamicum (strain ATCC 13032 / DSM 20300 / JCM 1318 / BCRC 11384 / CCUG 27702 / LMG 3730 / NBRC 12168 / NCIMB 10025 / NRRL B-2784 / 534).